The sequence spans 606 residues: Phosphomethylpyrimidine synthase (606 aa).

The segment covering 1 to 13 has biased composition (polar residues); the sequence is MTTADARTPASKQ. Disordered regions lie at residues 1-49 and 105-147; these read MTTA…SRPD and AGRP…DGRP. The span at 14–31 shows a compositional bias: low complexity; that stretch reads NDGTPDGTTPDAGTPNDG. The span at 105–117 shows a compositional bias: basic and acidic residues; that stretch reads AGRPVRPEDDGLK. Substrate is bound by residues Asn213, Met242, Tyr271, His307, 327 to 329, 368 to 371, and Glu407; these read SRG and DGLR. Residue His411 participates in Zn(2+) binding. Residue Tyr434 coordinates substrate. Position 475 (His475) interacts with Zn(2+). [4Fe-4S] cluster is bound by residues Cys555, Cys558, and Cys563.

The protein belongs to the ThiC family. Requires [4Fe-4S] cluster as cofactor.

The enzyme catalyses 5-amino-1-(5-phospho-beta-D-ribosyl)imidazole + S-adenosyl-L-methionine = 4-amino-2-methyl-5-(phosphooxymethyl)pyrimidine + CO + 5'-deoxyadenosine + formate + L-methionine + 3 H(+). It functions in the pathway cofactor biosynthesis; thiamine diphosphate biosynthesis. In terms of biological role, catalyzes the synthesis of the hydroxymethylpyrimidine phosphate (HMP-P) moiety of thiamine from aminoimidazole ribotide (AIR) in a radical S-adenosyl-L-methionine (SAM)-dependent reaction. This is Phosphomethylpyrimidine synthase from Streptomyces griseus subsp. griseus (strain JCM 4626 / CBS 651.72 / NBRC 13350 / KCC S-0626 / ISP 5235).